A 353-amino-acid chain; its full sequence is Photosystem II protein D1 (353 aa).

Residue Thr-2 is modified to N-acetylthreonine. A Phosphothreonine modification is found at Thr-2. The next 3 helical transmembrane spans lie at 29–46, 118–133, and 142–156; these read YIGW…TATS, HFLL…EWEL, and WIAV…AATA. His-118 lines the chlorophyll a pocket. Residue Tyr-126 participates in pheophytin a binding. 2 residues coordinate [CaMn4O5] cluster: Asp-170 and Glu-189. The helical transmembrane segment at 197 to 218 threads the bilayer; the sequence is FHMLGVAGVFGGSLFSAMHGSL. Residue His-198 coordinates chlorophyll a. A quinone contacts are provided by residues His-215 and 264-265; that span reads SF. His-215 serves as a coordination point for Fe cation. His-272 provides a ligand contact to Fe cation. Residues 274–288 traverse the membrane as a helical segment; sequence FLAAWPVVCIWFTAL. Positions 332, 333, 342, and 344 each coordinate [CaMn4O5] cluster. A propeptide spanning residues 345 to 353 is cleaved from the precursor; that stretch reads SVDAPAVQG.

This sequence belongs to the reaction center PufL/M/PsbA/D family. As to quaternary structure, PSII is composed of 1 copy each of membrane proteins PsbA, PsbB, PsbC, PsbD, PsbE, PsbF, PsbH, PsbI, PsbJ, PsbK, PsbL, PsbM, PsbT, PsbX, PsbY, PsbZ, Psb30/Ycf12, at least 3 peripheral proteins of the oxygen-evolving complex and a large number of cofactors. It forms dimeric complexes. The D1/D2 heterodimer binds P680, chlorophylls that are the primary electron donor of PSII, and subsequent electron acceptors. It shares a non-heme iron and each subunit binds pheophytin, quinone, additional chlorophylls, carotenoids and lipids. D1 provides most of the ligands for the Mn4-Ca-O5 cluster of the oxygen-evolving complex (OEC). There is also a Cl(-1) ion associated with D1 and D2, which is required for oxygen evolution. The PSII complex binds additional chlorophylls, carotenoids and specific lipids. serves as cofactor. Tyr-161 forms a radical intermediate that is referred to as redox-active TyrZ, YZ or Y-Z. Post-translationally, C-terminally processed by CTPA; processing is essential to allow assembly of the oxygen-evolving complex and thus photosynthetic growth.

Its subcellular location is the plastid. It is found in the chloroplast thylakoid membrane. The enzyme catalyses 2 a plastoquinone + 4 hnu + 2 H2O = 2 a plastoquinol + O2. Its function is as follows. Photosystem II (PSII) is a light-driven water:plastoquinone oxidoreductase that uses light energy to abstract electrons from H(2)O, generating O(2) and a proton gradient subsequently used for ATP formation. It consists of a core antenna complex that captures photons, and an electron transfer chain that converts photonic excitation into a charge separation. The D1/D2 (PsbA/PsbD) reaction center heterodimer binds P680, the primary electron donor of PSII as well as several subsequent electron acceptors. The polypeptide is Photosystem II protein D1 (Nephroselmis olivacea (Green alga)).